Consider the following 294-residue polypeptide: tRNA pseudouridine synthase B (294 aa).

Asp39 acts as the Nucleophile in catalysis.

Belongs to the pseudouridine synthase TruB family. Type 1 subfamily.

It catalyses the reaction uridine(55) in tRNA = pseudouridine(55) in tRNA. Responsible for synthesis of pseudouridine from uracil-55 in the psi GC loop of transfer RNAs. In Streptococcus pyogenes serotype M5 (strain Manfredo), this protein is tRNA pseudouridine synthase B.